The sequence spans 57 residues: Preprotein translocase subunit SecG (57 aa).

The Cytoplasmic segment spans residues 1 to 33 (MPSSKKKKENVPVMSMAGLIRYYEEEHEKYKVD). A helical membrane pass occupies residues 34 to 55 (PIYVIIASIVLVAVVVAVTKII). Residues 56–57 (PP) are Extracellular-facing.

Belongs to the SEC61-beta family. As to quaternary structure, component of the protein translocase complex. Heterotrimer consisting of alpha (SecY), beta (SecG) and gamma (SecE) subunits. Can form oligomers of the heterotrimer.

It localises to the cell membrane. Functionally, involved in protein export. The function of the beta subunit is unknown, but it may be involved in stabilization of the trimeric complex. This Metallosphaera sedula (strain ATCC 51363 / DSM 5348 / JCM 9185 / NBRC 15509 / TH2) protein is Preprotein translocase subunit SecG.